The primary structure comprises 239 residues: Tumor necrosis factor ligand superfamily member 8 (239 aa).

Positions M1 to P36 are disordered. At M1–S43 the chain is on the cytoplasmic side. The chain crosses the membrane as a helical; Signal-anchor for type II membrane protein span at residues Y44–V67. At Q68–D239 the chain is on the extracellular side. Residues N75, N86, N114, N158, N194, and N206 are each glycosylated (N-linked (GlcNAc...) asparagine). Residues S103 to L230 enclose the THD domain. A disulfide bridge connects residues C156 and C182.

Belongs to the tumor necrosis factor family. In terms of assembly, homotrimer.

The protein resides in the membrane. Cytokine that binds to TNFRSF8/CD30. Induces proliferation of T-cells. This Mus musculus (Mouse) protein is Tumor necrosis factor ligand superfamily member 8 (Tnfsf8).